The following is a 282-amino-acid chain: Probable endonuclease LCL3 (282 aa).

Residues 55–71 (SNLIPTVLLTSGILFAV) form a helical membrane-spanning segment. Residues 95-256 (RSILGKVTSV…KKKGKGLWKA (162 aa)) enclose the TNase-like domain. Residue R144 is part of the active site. D149 contributes to the Ca(2+) binding site. Catalysis depends on residues E152 and R192.

The protein belongs to the LCL3 family.

The protein localises to the mitochondrion. It is found in the membrane. The polypeptide is Probable endonuclease LCL3 (LCL3) (Arthroderma otae (strain ATCC MYA-4605 / CBS 113480) (Microsporum canis)).